Consider the following 97-residue polypeptide: Cell division protein FtsL (97 aa).

Residues 1–11 are Cytoplasmic-facing; the sequence is MSRLFVKRLPT. A helical membrane pass occupies residues 12-32; that stretch reads GSFLMLLLYIGLLLSAIAVAY. At 33-97 the chain is on the periplasmic side; sequence STYWNRQLLN…DPAEVRMVAP (65 aa).

The protein belongs to the FtsL family. Part of a complex composed of FtsB, FtsL and FtsQ.

Its subcellular location is the cell inner membrane. Essential cell division protein. May link together the upstream cell division proteins, which are predominantly cytoplasmic, with the downstream cell division proteins, which are predominantly periplasmic. This is Cell division protein FtsL from Pseudomonas aeruginosa (strain ATCC 15692 / DSM 22644 / CIP 104116 / JCM 14847 / LMG 12228 / 1C / PRS 101 / PAO1).